The primary structure comprises 279 residues: Protein SCO2 homolog, mitochondrial (279 aa).

A helical membrane pass occupies residues 73-90 (LVVTLLFGGGIIGTWWYV). Over 91–279 (HQEKEKRIQM…MKTFVRLFPD (189 aa)) the chain is Mitochondrial intermembrane. In terms of domain architecture, Thioredoxin spans 97-271 (RIQMQRLEQL…IAESIRNHMK (175 aa)). Cu cation contacts are provided by Cys-145, Cys-149, and His-236. Cys-145 and Cys-149 are joined by a disulfide.

It belongs to the SCO1/2 family. In terms of assembly, homodimer.

Its subcellular location is the mitochondrion inner membrane. In terms of biological role, copper metallochaperone essential for the synthesis and maturation of cytochrome c oxidase subunit II (MT-CO2/COX2) by facilitating the incorporation of copper into the Cu(A) site of MT-CO2/COX2. Could also act as a thiol-disulfide oxidoreductase to regulate the redox state of the cysteines in SCO1 during maturation of MT-CO2/COX2. The sequence is that of Protein SCO2 homolog, mitochondrial (sco2) from Danio rerio (Zebrafish).